We begin with the raw amino-acid sequence, 204 residues long: dCTP deaminase, dUMP-forming (204 aa).

Residues 117-122 (RSSLGR), His-128, Gly-132, Asp-135, 143-145 (TLE), Gln-163, Tyr-177, Lys-184, and Gln-188 each bind dCTP. Glu-145 acts as the Proton donor/acceptor in catalysis.

Homotrimer. Two trimers assemble into a hexamer by stacking on top of each other. Mg(2+) is required as a cofactor.

The catalysed reaction is dCTP + 2 H2O = dUMP + NH4(+) + diphosphate. It participates in pyrimidine metabolism; dUMP biosynthesis; dUMP from dCTP: step 1/1. Its activity is regulated as follows. Inhibited by dTTP. Bifunctional enzyme that catalyzes both the deamination of dCTP to dUTP and the hydrolysis of dUTP to dUMP without releasing the toxic dUTP intermediate. It also acts as a dUTP diphosphatase with a lower affinity for dUTP than for dCTP. This is dCTP deaminase, dUMP-forming from Methanocaldococcus jannaschii (strain ATCC 43067 / DSM 2661 / JAL-1 / JCM 10045 / NBRC 100440) (Methanococcus jannaschii).